A 152-amino-acid polypeptide reads, in one-letter code: MSESRSMVEIFSDGACSGNPGPGGFGTLLRCGERVRELSGFDPETTNNRMELLGAIAGLEALTRPCRVRLTTDSQYVCKGMTEWIHGWQKKGWKNSKKEDVANRDLWERLLVLVSKHEVSWHWVRGHAGHAENERCDELARQAIADGCSSVV.

The region spanning 4 to 145 is the RNase H type-1 domain; sequence SRSMVEIFSD…CDELARQAIA (142 aa). Residues Asp-13, Glu-51, Asp-73, and Asp-137 each coordinate Mg(2+).

Belongs to the RNase H family. In terms of assembly, monomer. The cofactor is Mg(2+).

The protein localises to the cytoplasm. It catalyses the reaction Endonucleolytic cleavage to 5'-phosphomonoester.. Its function is as follows. Endonuclease that specifically degrades the RNA of RNA-DNA hybrids. In Syntrophotalea carbinolica (strain DSM 2380 / NBRC 103641 / GraBd1) (Pelobacter carbinolicus), this protein is Ribonuclease H.